The following is a 362-amino-acid chain: Peptide chain release factor 1 (362 aa).

Gln-237 is modified (N5-methylglutamine). The tract at residues 289 to 308 (AAEISDTRRNLLGSGDRSDR) is disordered.

This sequence belongs to the prokaryotic/mitochondrial release factor family. Methylated by PrmC. Methylation increases the termination efficiency of RF1.

It localises to the cytoplasm. Its function is as follows. Peptide chain release factor 1 directs the termination of translation in response to the peptide chain termination codons UAG and UAA. The sequence is that of Peptide chain release factor 1 from Vibrio cholerae serotype O1 (strain ATCC 39541 / Classical Ogawa 395 / O395).